The sequence spans 464 residues: L-cystine uptake protein TcyP (464 aa).

The next 10 helical transmembrane spans lie at 3–23 (TLLV…LYYM), 34–54 (VFTA…IYEP), 73–93 (YVKL…ISAF), 107–127 (GLII…GIAA), 184–204 (PTST…FIGV), 225–245 (IVMR…LALM), 263–283 (FVLA…LLIA), 347–367 (AGIY…IDPL), 371–391 (FILT…GVGG), and 395–415 (FAAL…ALVI).

Belongs to the dicarboxylate/amino acid:cation symporter (DAACS) (TC 2.A.23) family.

Its subcellular location is the membrane. Functionally, mediates uptake of L-cystine, the oxidized form of L-cysteine. This Bacillus cereus (strain ATCC 14579 / DSM 31 / CCUG 7414 / JCM 2152 / NBRC 15305 / NCIMB 9373 / NCTC 2599 / NRRL B-3711) protein is L-cystine uptake protein TcyP.